The primary structure comprises 419 residues: Serine hydroxymethyltransferase (419 aa).

Residues Leu121 and 125-127 (GHL) contribute to the (6S)-5,6,7,8-tetrahydrofolate site. Lys231 is subject to N6-(pyridoxal phosphate)lysine.

Belongs to the SHMT family. As to quaternary structure, homodimer. Pyridoxal 5'-phosphate serves as cofactor.

Its subcellular location is the cytoplasm. It catalyses the reaction (6R)-5,10-methylene-5,6,7,8-tetrahydrofolate + glycine + H2O = (6S)-5,6,7,8-tetrahydrofolate + L-serine. Its pathway is one-carbon metabolism; tetrahydrofolate interconversion. It functions in the pathway amino-acid biosynthesis; glycine biosynthesis; glycine from L-serine: step 1/1. Functionally, catalyzes the reversible interconversion of serine and glycine with tetrahydrofolate (THF) serving as the one-carbon carrier. This reaction serves as the major source of one-carbon groups required for the biosynthesis of purines, thymidylate, methionine, and other important biomolecules. Also exhibits THF-independent aldolase activity toward beta-hydroxyamino acids, producing glycine and aldehydes, via a retro-aldol mechanism. This chain is Serine hydroxymethyltransferase, found in Phytoplasma mali (strain AT).